We begin with the raw amino-acid sequence, 556 residues long: Potassium-transporting ATPase potassium-binding subunit (556 aa).

10 helical membrane passes run 1–21, 60–80, 130–150, 173–193, 245–265, 281–301, 374–394, 416–436, 482–502, and 529–549; these read MTWI…GIAQ, SYAR…YALQ, GLCV…VALI, LRIL…GGAV, PQPW…FSLP, ILAA…AAEF, GLYG…LLVG, ILVM…VPGL, AALG…ILAL, and LIVF…LTLG.

This sequence belongs to the KdpA family. As to quaternary structure, the system is composed of three essential subunits: KdpA, KdpB and KdpC.

The protein localises to the cell membrane. Its function is as follows. Part of the high-affinity ATP-driven potassium transport (or Kdp) system, which catalyzes the hydrolysis of ATP coupled with the electrogenic transport of potassium into the cytoplasm. This subunit binds the extracellular potassium ions and delivers the ions to the membrane domain of KdpB through an intramembrane tunnel. This Cutibacterium acnes (strain DSM 16379 / KPA171202) (Propionibacterium acnes) protein is Potassium-transporting ATPase potassium-binding subunit.